A 194-amino-acid chain; its full sequence is Peptidyl-tRNA hydrolase (194 aa).

Tyrosine 16 contributes to the tRNA binding site. Histidine 21 serves as the catalytic Proton acceptor. 3 residues coordinate tRNA: phenylalanine 67, asparagine 69, and asparagine 115.

The protein belongs to the PTH family. In terms of assembly, monomer.

It localises to the cytoplasm. It carries out the reaction an N-acyl-L-alpha-aminoacyl-tRNA + H2O = an N-acyl-L-amino acid + a tRNA + H(+). Functionally, hydrolyzes ribosome-free peptidyl-tRNAs (with 1 or more amino acids incorporated), which drop off the ribosome during protein synthesis, or as a result of ribosome stalling. Catalyzes the release of premature peptidyl moieties from peptidyl-tRNA molecules trapped in stalled 50S ribosomal subunits, and thus maintains levels of free tRNAs and 50S ribosomes. The protein is Peptidyl-tRNA hydrolase of Escherichia fergusonii (strain ATCC 35469 / DSM 13698 / CCUG 18766 / IAM 14443 / JCM 21226 / LMG 7866 / NBRC 102419 / NCTC 12128 / CDC 0568-73).